Here is a 757-residue protein sequence, read N- to C-terminus: Polymeric immunoglobulin receptor (757 aa).

Positions 1-18 (MSRLFLACLLAIFPVVSM) are cleaved as a signal peptide. The Ig-like V-type 1; required for binding to polymeric IgA and IgM domain maps to 19 to 126 (KSPIFGPEEV…RGLNFDVSLE (108 aa)). At 19–632 (KSPIFGPEEV…TGYSGSSKAL (614 aa)) the chain is on the extracellular side. 7 disulfides stabilise this stretch: Cys-40-Cys-110, Cys-56-Cys-64, Cys-152-Cys-220, Cys-257-Cys-324, Cys-271-Cys-279, Cys-370-Cys-440, and Cys-384-Cys-394. The N-linked (GlcNAc...) asparagine glycan is linked to Asn-83. Ig-like V-type domains lie at 145–237 (GRTV…DLQV), 250–341 (RSSV…VQAW), 353–457 (ASPS…LKVV), and 461–560 (PSLK…VYVA). N-linked (GlcNAc...) asparagine glycosylation is found at Asn-420 and Asn-468. Cystine bridges form between Cys-481–Cys-543, Cys-485–Cys-519, and Cys-495–Cys-502. The interval 607–627 (KDAAGGPGAPADPGRPTGYSG) is disordered. The helical transmembrane segment at 633-653 (VSTLVPLALVLVAGVVAIGVV) threads the bilayer. Residues 654-757 (RARHRKNVDR…AATQNGPTEA (104 aa)) lie on the Cytoplasmic side of the membrane. Phosphoserine occurs at positions 665, 674, 681, and 727. The span at 679-688 (ENSRDFEGRD) shows a compositional bias: basic and acidic residues. Residues 679 to 730 (ENSRDFEGRDNMGASPEAQETSLGGKDEFATTTEDTVESKEPKKAKRSSKEE) form a disordered region.

In terms of assembly, interacts (mainly via CDR1-like domain) with dimeric IgA. Interacts (mainly via CDR2-like domain) with pentameric IgM. Either free or part of the secretory IgA (sIgA) complex that consists of two, four or five IgA monomers, and two additional non-Ig polypeptides, namely the JCHAIN and the secretory component (the proteolytic product of PIGR). Free secretory component interacts with bacterial antigens toxA of C.difficile and eae of E.coli. Post-translationally, in the absence of dimeric IgA, Ser-727 is phosphorylated which allows PIGR to function normally. In terms of processing, N-glycosylated. N-glycosylation is required for anchoring IgA molecules to mucus, but is not necessary for Ig binding. As to expression, found in mammary gland, jejunum, lung, kidney and small intestine.

Its subcellular location is the cell membrane. The protein localises to the secreted. Functionally, mediates selective transcytosis of polymeric IgA and IgM across mucosal epithelial cells. Binds polymeric IgA and IgM at the basolateral surface of epithelial cells. The complex is then transported across the cell to be secreted at the apical surface. During this process, a cleavage occurs that separates the extracellular (known as the secretory component) from the transmembrane segment. In terms of biological role, through its N-linked glycans ensures anchoring of secretory IgA (sIgA) molecules to mucus lining the epithelial surface to neutralize extracellular pathogens. On its own (free form) may act as a non-specific microbial scavenger to prevent pathogen interaction with epithelial cells. This Bos taurus (Bovine) protein is Polymeric immunoglobulin receptor (PIGR).